A 430-amino-acid polypeptide reads, in one-letter code: Glutamate-1-semialdehyde 2,1-aminomutase 2 (430 aa).

Lys269 is subject to N6-(pyridoxal phosphate)lysine.

The protein belongs to the class-III pyridoxal-phosphate-dependent aminotransferase family. HemL subfamily. As to quaternary structure, homodimer. Pyridoxal 5'-phosphate is required as a cofactor.

The protein resides in the cytoplasm. The catalysed reaction is (S)-4-amino-5-oxopentanoate = 5-aminolevulinate. It functions in the pathway porphyrin-containing compound metabolism; protoporphyrin-IX biosynthesis; 5-aminolevulinate from L-glutamyl-tRNA(Glu): step 2/2. The sequence is that of Glutamate-1-semialdehyde 2,1-aminomutase 2 from Lysinibacillus sphaericus (strain C3-41).